The sequence spans 440 residues: Glutamate--tRNA ligase 2 (440 aa).

Positions 8-18 match the 'HIGH' region motif; sequence PSPTGYLHVGN. The short motif at 239–243 is the 'KMSKS' region element; that stretch reads ALSKR. Lys-242 is a binding site for ATP.

This sequence belongs to the class-I aminoacyl-tRNA synthetase family. Glutamate--tRNA ligase type 1 subfamily. In terms of assembly, monomer.

The protein localises to the cytoplasm. It catalyses the reaction tRNA(Glu) + L-glutamate + ATP = L-glutamyl-tRNA(Glu) + AMP + diphosphate. In terms of biological role, catalyzes the attachment of glutamate to tRNA(Glu) in a two-step reaction: glutamate is first activated by ATP to form Glu-AMP and then transferred to the acceptor end of tRNA(Glu). The protein is Glutamate--tRNA ligase 2 of Dinoroseobacter shibae (strain DSM 16493 / NCIMB 14021 / DFL 12).